Here is a 292-residue protein sequence, read N- to C-terminus: ATP synthase gamma chain (292 aa).

It belongs to the ATPase gamma chain family. F-type ATPases have 2 components, CF(1) - the catalytic core - and CF(0) - the membrane proton channel. CF(1) has five subunits: alpha(3), beta(3), gamma(1), delta(1), epsilon(1). CF(0) has three main subunits: a, b and c.

The protein localises to the cell inner membrane. Functionally, produces ATP from ADP in the presence of a proton gradient across the membrane. The gamma chain is believed to be important in regulating ATPase activity and the flow of protons through the CF(0) complex. This is ATP synthase gamma chain from Brucella ovis (strain ATCC 25840 / 63/290 / NCTC 10512).